Reading from the N-terminus, the 145-residue chain is METIFDYNQIKQIIPHRQPFLLIDKIVEYEEGKRCVGLKQVSGNEPFFQGHFPNYAVMPGVLITEALAQTGAVAMLNSEENKGKIALFAGIDKCRFKKQVVPGDTLMLEVEITKIKGPIGKGSAKATVDGQLACSCELTFAIQDA.

Residue H51 is part of the active site.

This sequence belongs to the thioester dehydratase family. FabZ subfamily.

It is found in the cytoplasm. The enzyme catalyses a (3R)-hydroxyacyl-[ACP] = a (2E)-enoyl-[ACP] + H2O. In terms of biological role, involved in unsaturated fatty acids biosynthesis. Catalyzes the dehydration of short chain beta-hydroxyacyl-ACPs and long chain saturated and unsaturated beta-hydroxyacyl-ACPs. The protein is 3-hydroxyacyl-[acyl-carrier-protein] dehydratase FabZ of Staphylococcus epidermidis (strain ATCC 35984 / DSM 28319 / BCRC 17069 / CCUG 31568 / BM 3577 / RP62A).